Here is a 153-residue protein sequence, read N- to C-terminus: Ubiquitin/ISG15-conjugating enzyme E2 L6 (153 aa).

Residues 2 to 149 (MASKRVAKEL…AEEFTLKFGV (148 aa)) enclose the UBC core domain. Cys-86 serves as the catalytic Glycyl thioester intermediate.

Belongs to the ubiquitin-conjugating enzyme family. As to quaternary structure, interacts with RNF19A, RNF19B and RNF144B. Interacts with FLT3 (tyrosine phosphorylated). ISGylated.

It carries out the reaction S-ubiquitinyl-[E1 ubiquitin-activating enzyme]-L-cysteine + [E2 ubiquitin-conjugating enzyme]-L-cysteine = [E1 ubiquitin-activating enzyme]-L-cysteine + S-ubiquitinyl-[E2 ubiquitin-conjugating enzyme]-L-cysteine.. Its pathway is protein modification; protein ubiquitination. Catalyzes the covalent attachment of ubiquitin or ISG15 to other proteins. Functions in the E6/E6-AP-induced ubiquitination of p53/TP53. Promotes ubiquitination and subsequent proteasomal degradation of FLT3. The chain is Ubiquitin/ISG15-conjugating enzyme E2 L6 (Ube2l6) from Mus musculus (Mouse).